The primary structure comprises 144 residues: Large ribosomal subunit protein uL15 (144 aa).

Residues 1–48 (MQLNNLKPAAGSKHAKRRVGRGIGSGLGKTAGRGHKGQKSRSGGFHKV) are disordered. Over residues 21–31 (RGIGSGLGKTA) the composition is skewed to gly residues.

This sequence belongs to the universal ribosomal protein uL15 family. In terms of assembly, part of the 50S ribosomal subunit.

Its function is as follows. Binds to the 23S rRNA. The polypeptide is Large ribosomal subunit protein uL15 (Cupriavidus taiwanensis (strain DSM 17343 / BCRC 17206 / CCUG 44338 / CIP 107171 / LMG 19424 / R1) (Ralstonia taiwanensis (strain LMG 19424))).